Consider the following 492-residue polypeptide: Serine/threonine-protein kinase 3 (492 aa).

The Protein kinase domain occupies 26-277 (FDVLEKLGEG…ATQLLQHPFI (252 aa)). Residues 32–40 (LGEGSYGSV) and K55 each bind ATP. Catalysis depends on D145, which acts as the Proton acceptor. Position 179 is a phosphothreonine; by autocatalysis (T179). Coiled-coil stretches lie at residues 286–328 (LRDL…TMVK) and 443–476 (NLDF…AKRQ). Residues 297–307 (KAKRQQEQQRE) are compositionally biased toward basic and acidic residues. Residues 297-339 (KAKRQQEQQRELEEDDENSEEEVEVDSHTMVKSGSESAGTMRA) form a disordered region. The span at 308 to 320 (LEEDDENSEEEVE) shows a compositional bias: acidic residues. The segment covering 326–339 (MVKSGSESAGTMRA) has biased composition (polar residues). Residues 438-485 (FDFLKNLDFEELQMRLTALDPMMEREIEELRQRYTAKRQPILDAMDAK) form the SARAH domain.

It belongs to the protein kinase superfamily. STE Ser/Thr protein kinase family. STE20 subfamily. In terms of assembly, homodimer; mediated via the coiled-coil region. Requires Mg(2+) as cofactor.

It localises to the cytoplasm. It is found in the nucleus. It carries out the reaction L-seryl-[protein] + ATP = O-phospho-L-seryl-[protein] + ADP + H(+). The enzyme catalyses L-threonyl-[protein] + ATP = O-phospho-L-threonyl-[protein] + ADP + H(+). Its activity is regulated as follows. Inhibited by the C-terminal non-catalytic region. Activated by caspase-cleavage. Full activation also requires homodimerization and autophosphorylation of Thr-179. Stress-activated, pro-apoptotic kinase which, following caspase-cleavage, enters the nucleus and induces chromatin condensation followed by internucleosomal DNA fragmentation. Key component of the Hippo signaling pathway which plays a pivotal role in organ size control and tumor suppression by restricting proliferation and promoting apoptosis. The core of this pathway is composed of a kinase cascade wherein stk3/mst2 and stk4/mst1, in complex with its regulatory protein sav1, phosphorylates and activates lats1/2 in complex with its regulatory protein mob1, which in turn phosphorylates and inactivates yap1 oncoprotein and wwtr1/taz. Phosphorylation of yap1 by lats2 inhibits its translocation into the nucleus to regulate cellular genes important for cell proliferation, cell death, and cell migration. In Danio rerio (Zebrafish), this protein is Serine/threonine-protein kinase 3 (stk3).